The sequence spans 158 residues: Transcription antitermination protein NusB (158 aa).

Polar residues predominate over residues 1–13 (MSEAGDTSPQPGK). The interval 1–24 (MSEAGDTSPQPGKTGQPKAGDRRR) is disordered.

This sequence belongs to the NusB family.

Functionally, involved in transcription antitermination. Required for transcription of ribosomal RNA (rRNA) genes. Binds specifically to the boxA antiterminator sequence of the ribosomal RNA (rrn) operons. The protein is Transcription antitermination protein NusB of Marinobacter nauticus (strain ATCC 700491 / DSM 11845 / VT8) (Marinobacter aquaeolei).